Here is a 217-residue protein sequence, read N- to C-terminus: Trimethylamine corrinoid protein 2 (217 aa).

One can recognise a B12-binding N-terminal domain in the interval 1-92; the sequence is MAGKEEIIAK…EMEKRKAKTT (92 aa). The 124-residue stretch at 94-217 folds into the B12-binding domain; it reads LGTVIIGTIE…VNKIKAAIKS (124 aa). His107 lines the methylcob(III)alamin pocket.

Belongs to the methylamine corrinoid protein family. As to quaternary structure, can form a complex with MttB.

Its pathway is one-carbon metabolism; methanogenesis from trimethylamine. Functionally, acts probably as a methyl group carrier between MttB and either MtbA or MtaA. This Methanosarcina acetivorans (strain ATCC 35395 / DSM 2834 / JCM 12185 / C2A) protein is Trimethylamine corrinoid protein 2 (mttC2).